A 283-amino-acid polypeptide reads, in one-letter code: Tetrahydroxynaphthalene reductase (283 aa).

The segment at 1–21 (MPAVTQPRGESKYDAIPGPLG) is disordered. 39–63 (RGIGREMAMELGRRGCKVIVNYANS) is an NADP(+) binding site. S164 serves as a coordination point for substrate. Y178 (proton acceptor) is an active-site residue.

Belongs to the short-chain dehydrogenases/reductases (SDR) family. As to quaternary structure, homotetramer.

The enzyme catalyses scytalone + NADP(+) = naphthalene-1,3,6,8-tetrol + NADPH + H(+). It participates in pigment biosynthesis; melanin biosynthesis. In terms of biological role, catalyzes the NADPH-dependent reduction of 1,3,6,8-tetrahydroxynaphthalene (T4HN) into (+)-scytalone and 1,3,8-trihydroxynaphthalene into (-)-vermelone. This enzyme is the biochemical target of several commercially important fungicides which are used to prevent blast disease in rice plants. This is Tetrahydroxynaphthalene reductase from Pyricularia oryzae (strain 70-15 / ATCC MYA-4617 / FGSC 8958) (Rice blast fungus).